Reading from the N-terminus, the 315-residue chain is Calumenin-A (315 aa).

An N-terminal signal peptide occupies residues 1–19 (MEIRPLLMCFALCVVYATS). 6 EF-hand domains span residues 68–103 (ESKNRLGKIVEKIDADEDGFVTEAELKAWIKKAQKK), 104–139 (YIYDNVERQWKDFDLNNDRMISWEEYKNVTYGTYLD), 151–186 (QMMARDERRFKMADGNGDHIADKEEFTAFLHPEEYE), 188–223 (MKDIVVLETMEDIDKNGDGFIDLEEYIGDMYNHEDE), 229–264 (WVATEREQFSEFRDKNKDGKMDREETMDWILPADYD), and 265–300 (HAEAEAKHLVYESDTNKDGKLTKEEILNKYDLFVGS). Residues Asp81, Asp83, Asp85, Glu92, Asp117, Asn119, Asp121, Met123, and Glu128 each contribute to the Ca(2+) site. Asn131 carries N-linked (GlcNAc...) asparagine glycosylation. Ca(2+) contacts are provided by Asp164, Asn166, Asp168, Glu175, Asp201, Asn203, Asp205, Glu212, Asp242, Asn244, Asp246, Lys248, Glu253, Asp278, Asn280, Asp282, Lys284, and Glu289. The short motif at 312-315 (HDEF) is the Prevents secretion from ER element.

Belongs to the CREC family. Interacts with ggcx.

Its subcellular location is the endoplasmic reticulum membrane. It localises to the golgi apparatus. The protein resides in the secreted. The protein localises to the melanosome. It is found in the sarcoplasmic reticulum lumen. In terms of biological role, involved in regulation of vitamin K-dependent carboxylation of multiple N-terminal glutamate residues. Seems to inhibit gamma-carboxylase ggcx. Binds 7 calcium ions with a low affinity. The polypeptide is Calumenin-A (calua) (Danio rerio (Zebrafish)).